A 169-amino-acid chain; its full sequence is MSNVMRTPVVEKVIVHMGVGESGQHLVDAEEILRNITGQEVVRCFAKRTLPAFSIKKNEPIGCKVTLRGQRAQQFLETALGIVDKTLVRSQFDSLGNVSFGIEEHTDFPGMKYDPNIGVFGMDVTVVIKRPGERICKRRIATRKIPTNHRVTLEDSIAFLNDSYGVEVM.

This sequence belongs to the universal ribosomal protein uL5 family. In terms of assembly, part of the 50S ribosomal subunit; contacts the 5S rRNA and probably tRNA. Forms a bridge to the 30S subunit in the 70S ribosome.

Functionally, this is one of the proteins that bind and probably mediate the attachment of the 5S RNA into the large ribosomal subunit, where it forms part of the central protuberance. In the 70S ribosome it contacts protein S13 of the 30S subunit (bridge B1b), connecting the 2 subunits; this bridge is implicated in subunit movement. May contact the P site tRNA; the 5S rRNA and some of its associated proteins might help stabilize positioning of ribosome-bound tRNAs. This Methanosarcina barkeri (strain Fusaro / DSM 804) protein is Large ribosomal subunit protein uL5.